The sequence spans 449 residues: Na(+)/H(+) antiporter NhaA 1 (449 aa).

The next 11 helical transmembrane spans lie at 38-58, 79-99, 117-137, 145-165, 175-195, 198-218, 240-260, 311-331, 347-367, 390-410, and 422-442; these read GILL…PWAA, FTIR…VVGM, VLPL…YAAF, AGWA…LTLV, VFLT…IALF, SGLH…LACL, MHHG…FMPA, FVHL…ALAN, PLPL…IFLF, GVAV…GLAF, and LGIL…LRFV.

It belongs to the NhaA Na(+)/H(+) (TC 2.A.33) antiporter family.

It is found in the cell inner membrane. The catalysed reaction is Na(+)(in) + 2 H(+)(out) = Na(+)(out) + 2 H(+)(in). In terms of biological role, na(+)/H(+) antiporter that extrudes sodium in exchange for external protons. The chain is Na(+)/H(+) antiporter NhaA 1 from Myxococcus xanthus (strain DK1622).